We begin with the raw amino-acid sequence, 274 residues long: Malonyl-[acyl-carrier protein] O-methyltransferase (274 aa).

It belongs to the methyltransferase superfamily.

It carries out the reaction malonyl-[ACP] + S-adenosyl-L-methionine = malonyl-[ACP] methyl ester + S-adenosyl-L-homocysteine. The protein operates within cofactor biosynthesis; biotin biosynthesis. Functionally, converts the free carboxyl group of a malonyl-thioester to its methyl ester by transfer of a methyl group from S-adenosyl-L-methionine (SAM). It allows to synthesize pimeloyl-ACP via the fatty acid synthetic pathway. This chain is Malonyl-[acyl-carrier protein] O-methyltransferase, found in Bacteroides helcogenes (strain ATCC 35417 / DSM 20613 / JCM 6297 / CCUG 15421 / P 36-108).